We begin with the raw amino-acid sequence, 71 residues long: General transcription factor IIH subunit 5 (71 aa).

At threonine 69 the chain carries Phosphothreonine.

This sequence belongs to the TFB5 family. As to quaternary structure, component of the 7-subunit TFIIH core complex composed of XPB/ERCC3, XPD/ERCC2, GTF2H1, GTF2H2, GTF2H3, GTF2H4 and GTF2H5, which is active in NER. The core complex associates with the 3-subunit CDK-activating kinase (CAK) module composed of CCNH/cyclin H, CDK7 and MNAT1 to form the 10-subunit holoenzyme (holo-TFIIH) active in transcription. Part of TBP-based Pol II pre-initiation complex (PIC), in which Pol II core assembles with general transcription factors and other specific initiation factors including GTF2E1, GTF2E2, GTF2F1, GTF2F2, TCEA1, ERCC2, ERCC3, GTF2H2, GTF2H3, GTF2H4, GTF2H5, GTF2A1, GTF2A2, GTF2B and TBP; this large multi-subunit PIC complex mediates DNA unwinding and targets Pol II core to the transcription start site where the first phosphodiester bond forms.

Its subcellular location is the nucleus. It localises to the cytoplasm. Its function is as follows. Component of the general transcription and DNA repair factor IIH (TFIIH) core complex, which is involved in general and transcription-coupled nucleotide excision repair (NER) of damaged DNA and, when complexed to CAK, in RNA transcription by RNA polymerase II. In NER, TFIIH acts by opening DNA around the lesion to allow the excision of the damaged oligonucleotide and its replacement by a new DNA fragment. In transcription, TFIIH has an essential role in transcription initiation. When the pre-initiation complex (PIC) has been established, TFIIH is required for promoter opening and promoter escape. Phosphorylation of the C-terminal tail (CTD) of the largest subunit of RNA polymerase II by the kinase module CAK controls the initiation of transcription. Necessary for the stability of the TFIIH complex and for the presence of normal levels of TFIIH in the cell. In Mus musculus (Mouse), this protein is General transcription factor IIH subunit 5.